A 173-amino-acid chain; its full sequence is Bifunctional protein PyrR (173 aa).

The PRPP-binding signature appears at 93–105 (VILVDDVLYTGRT).

This sequence belongs to the purine/pyrimidine phosphoribosyltransferase family. PyrR subfamily. Homodimer and homohexamer; in equilibrium.

It carries out the reaction UMP + diphosphate = 5-phospho-alpha-D-ribose 1-diphosphate + uracil. Its function is as follows. Regulates transcriptional attenuation of the pyrimidine nucleotide (pyr) operon by binding in a uridine-dependent manner to specific sites on pyr mRNA. This disrupts an antiterminator hairpin in the RNA and favors formation of a downstream transcription terminator, leading to a reduced expression of downstream genes. Also displays a weak uracil phosphoribosyltransferase activity which is not physiologically significant. The protein is Bifunctional protein PyrR of Streptococcus thermophilus (strain ATCC BAA-491 / LMD-9).